The primary structure comprises 172 residues: Adenine phosphoribosyltransferase (172 aa).

The protein belongs to the purine/pyrimidine phosphoribosyltransferase family. Homodimer.

The protein localises to the cytoplasm. It carries out the reaction AMP + diphosphate = 5-phospho-alpha-D-ribose 1-diphosphate + adenine. The protein operates within purine metabolism; AMP biosynthesis via salvage pathway; AMP from adenine: step 1/1. Catalyzes a salvage reaction resulting in the formation of AMP, that is energically less costly than de novo synthesis. The protein is Adenine phosphoribosyltransferase of Streptococcus agalactiae serotype Ia (strain ATCC 27591 / A909 / CDC SS700).